A 48-amino-acid polypeptide reads, in one-letter code: Histone H4 (48 aa).

Over residues M1–K14 the composition is skewed to gly residues. The segment at M1–R23 is disordered.

Belongs to the histone H4 family. In terms of assembly, the nucleosome is a histone octamer containing two molecules each of H2A, H2B, H3 and H4 assembled in one H3-H4 heterotetramer and two H2A-H2B heterodimers. The octamer wraps approximately 147 bp of DNA.

It localises to the nucleus. The protein resides in the chromosome. Core component of nucleosome. Nucleosomes wrap and compact DNA into chromatin, limiting DNA accessibility to the cellular machineries which require DNA as a template. Histones thereby play a central role in transcription regulation, DNA repair, DNA replication and chromosomal stability. DNA accessibility is regulated via a complex set of post-translational modifications of histones, also called histone code, and nucleosome remodeling. In Blepharisma japonicum, this protein is Histone H4.